The chain runs to 273 residues: Putative phosphoenolpyruvate synthase regulatory protein (273 aa).

Residue 153–160 (AVSRAGKT) coordinates ADP.

The protein belongs to the pyruvate, phosphate/water dikinase regulatory protein family. PSRP subfamily.

The enzyme catalyses [pyruvate, water dikinase] + ADP = [pyruvate, water dikinase]-phosphate + AMP + H(+). It carries out the reaction [pyruvate, water dikinase]-phosphate + phosphate + H(+) = [pyruvate, water dikinase] + diphosphate. Its function is as follows. Bifunctional serine/threonine kinase and phosphorylase involved in the regulation of the phosphoenolpyruvate synthase (PEPS) by catalyzing its phosphorylation/dephosphorylation. The chain is Putative phosphoenolpyruvate synthase regulatory protein from Xylella fastidiosa (strain M12).